A 154-amino-acid polypeptide reads, in one-letter code: UPF0178 protein SSP2038 (154 aa).

The protein belongs to the UPF0178 family.

This is UPF0178 protein SSP2038 from Staphylococcus saprophyticus subsp. saprophyticus (strain ATCC 15305 / DSM 20229 / NCIMB 8711 / NCTC 7292 / S-41).